A 322-amino-acid polypeptide reads, in one-letter code: Undecaprenyl-phosphate 4-deoxy-4-formamido-L-arabinose transferase (322 aa).

The Cytoplasmic portion of the chain corresponds to 1–235 (MFEIHPVKKV…TCLTTTPLRM (235 aa)). Residues 236 to 256 (LSLLGSIIAIGGFSIAVLLVI) form a helical membrane-spanning segment. Residues 257–269 (LRLTFGPQWAAEG) lie on the Periplasmic side of the membrane. The chain crosses the membrane as a helical span at residues 270–290 (VFMLFAVLFTFIGAQFIGMGL). The Cytoplasmic portion of the chain corresponds to 291–322 (LGEYIGRIYTDVRARPRYFVQQVIRPSSKENE).

It belongs to the glycosyltransferase 2 family.

It localises to the cell inner membrane. It catalyses the reaction UDP-4-deoxy-4-formamido-beta-L-arabinose + di-trans,octa-cis-undecaprenyl phosphate = 4-deoxy-4-formamido-alpha-L-arabinopyranosyl di-trans,octa-cis-undecaprenyl phosphate + UDP. The protein operates within glycolipid biosynthesis; 4-amino-4-deoxy-alpha-L-arabinose undecaprenyl phosphate biosynthesis; 4-amino-4-deoxy-alpha-L-arabinose undecaprenyl phosphate from UDP-4-deoxy-4-formamido-beta-L-arabinose and undecaprenyl phosphate: step 1/2. It participates in bacterial outer membrane biogenesis; lipopolysaccharide biosynthesis. Functionally, catalyzes the transfer of 4-deoxy-4-formamido-L-arabinose from UDP to undecaprenyl phosphate. The modified arabinose is attached to lipid A and is required for resistance to polymyxin and cationic antimicrobial peptides. This Escherichia coli O7:K1 (strain IAI39 / ExPEC) protein is Undecaprenyl-phosphate 4-deoxy-4-formamido-L-arabinose transferase.